A 388-amino-acid polypeptide reads, in one-letter code: Tryptophan synthase beta chain 1 (388 aa).

Lysine 82 is modified (N6-(pyridoxal phosphate)lysine).

Belongs to the TrpB family. In terms of assembly, tetramer of two alpha and two beta chains. Pyridoxal 5'-phosphate serves as cofactor.

It catalyses the reaction (1S,2R)-1-C-(indol-3-yl)glycerol 3-phosphate + L-serine = D-glyceraldehyde 3-phosphate + L-tryptophan + H2O. It participates in amino-acid biosynthesis; L-tryptophan biosynthesis; L-tryptophan from chorismate: step 5/5. Functionally, the beta subunit is responsible for the synthesis of L-tryptophan from indole and L-serine. This Pyrococcus abyssi (strain GE5 / Orsay) protein is Tryptophan synthase beta chain 1 (trpB1).